Here is a 313-residue protein sequence, read N- to C-terminus: Formimidoylglutamase (313 aa).

The Mn(2+) site is built by H130, D155, H157, D159, D241, and D243.

The protein belongs to the arginase family. Requires Mn(2+) as cofactor.

The catalysed reaction is N-formimidoyl-L-glutamate + H2O = formamide + L-glutamate. Its pathway is amino-acid degradation; L-histidine degradation into L-glutamate; L-glutamate from N-formimidoyl-L-glutamate (hydrolase route): step 1/1. Catalyzes the conversion of N-formimidoyl-L-glutamate to L-glutamate and formamide. This chain is Formimidoylglutamase, found in Salmonella agona (strain SL483).